The following is a 75-amino-acid chain: Sec-independent protein translocase protein TatA (75 aa).

A helical transmembrane segment spans residues 1–21 (MGSMSIWHWIVVLAVVLLLFG). The segment at 43–75 (MAEDDDAPAKPAEPPRAVPHQATPAPESEKKAV) is disordered.

It belongs to the TatA/E family. In terms of assembly, the Tat system comprises two distinct complexes: a TatABC complex, containing multiple copies of TatA, TatB and TatC subunits, and a separate TatA complex, containing only TatA subunits. Substrates initially bind to the TatABC complex, which probably triggers association of the separate TatA complex to form the active translocon.

The protein resides in the cell inner membrane. In terms of biological role, part of the twin-arginine translocation (Tat) system that transports large folded proteins containing a characteristic twin-arginine motif in their signal peptide across membranes. TatA could form the protein-conducting channel of the Tat system. The protein is Sec-independent protein translocase protein TatA of Azorhizobium caulinodans (strain ATCC 43989 / DSM 5975 / JCM 20966 / LMG 6465 / NBRC 14845 / NCIMB 13405 / ORS 571).